Consider the following 110-residue polypeptide: Insulin-2 (110 aa).

An N-terminal signal peptide occupies residues M1 to A24. Cystine bridges form between C31/C96, C43/C109, and C95/C100. A propeptide spans E57–Q87 (c peptide).

Belongs to the insulin family. In terms of assembly, heterodimer of a B chain and an A chain linked by two disulfide bonds.

The protein localises to the secreted. Insulin decreases blood glucose concentration. It increases cell permeability to monosaccharides, amino acids and fatty acids. It accelerates glycolysis, the pentose phosphate cycle, and glycogen synthesis in liver. The chain is Insulin-2 (Ins2) from Rattus norvegicus (Rat).